Here is a 293-residue protein sequence, read N- to C-terminus: MGFEMKPEKEVLELISSKNQCKSNPNSVKKKNKNKNKKMMMTWRRKKIDSPADGITAVRRLFNTCKEVFSNGGPGVIPSEDKIQQLREILDDMKPEDVGLTPTMPYFRPNSGVEARSSPPITYLHLHQCDQFSIGIFCLPPSGVIPLHNHPGMTVFSKLLFGTMHIKSYDWVVDAPMRDSKTRLAKLKVDSTFTAPCNASILYPEDGGNMHRFTAITACAVLDVLGPPYCNPEGRHCTYFLEFPLDKLSSEDDDVLSSEEEKEGYAWLQERDDNPEDHTNVVGALYRGPKVED.

Fe cation is bound by residues histidine 148, histidine 150, and histidine 211. The interval 250-293 (SEDDDVLSSEEEKEGYAWLQERDDNPEDHTNVVGALYRGPKVED) is disordered. Over residues 251-262 (EDDDVLSSEEEK) the composition is skewed to acidic residues. A compositionally biased stretch (basic and acidic residues) spans 269 to 279 (QERDDNPEDHT).

It belongs to the cysteine dioxygenase family. Fe(2+) serves as cofactor.

The protein localises to the nucleus. The protein resides in the cytoplasm. The catalysed reaction is L-cysteine + O2 = 3-sulfino-L-alanine + H(+). Functionally, catalyzes the oxidation of N-terminal cysteine residues (N-Cys), thus preparing the protein for N-end rule pathway-mediated proteasomal degradation, upstream of the N-end rule enzymes ATE1, ATE2 and PRT6. Controls the preparation of the group VII ethylene response factor (ERF-VII) proteins for degradation via the 26S proteasome N-end rule pathway. Acts as an oxygen sensor that controls the stability of ERF-VII proteins, which are stabilized in flooding-induced hypoxia, and regulate transcriptional adaptation to these adverse conditions. Not active on Cys located inside or at the C-terminus of a peptide. Acts redundantly with PCO2 to repress the anaerobic response. This chain is Plant cysteine oxidase 1, found in Arabidopsis thaliana (Mouse-ear cress).